Consider the following 91-residue polypeptide: Small ribosomal subunit protein uS19 (91 aa).

Belongs to the universal ribosomal protein uS19 family.

In terms of biological role, protein S19 forms a complex with S13 that binds strongly to the 16S ribosomal RNA. The protein is Small ribosomal subunit protein uS19 of Syntrophotalea carbinolica (strain DSM 2380 / NBRC 103641 / GraBd1) (Pelobacter carbinolicus).